The primary structure comprises 466 residues: Putative D-3-phosphoglycerate dehydrogenase (466 aa).

A compositionally biased stretch (basic and acidic residues) spans 1-15; that stretch reads MDIKGGRRGNVEDSL. The segment at 1–26 is disordered; it reads MDIKGGRRGNVEDSLNKLSLSPPDNN. Over residues 16–26 the composition is skewed to polar residues; sequence NKLSLSPPDNN. The residue at position 87 (serine 87) is a Phosphoserine. Residues 205-206 and aspartate 225 each bind NAD(+); that span reads HI. Serine 258 carries the phosphoserine modification. NAD(+)-binding positions include 282–284 and aspartate 308; that span reads ASR. The active site involves arginine 284. The active site involves glutamate 313. Histidine 344 serves as the catalytic Proton donor. 344–347 is an NAD(+) binding site; the sequence is HIGG. In terms of domain architecture, ACT spans 396–466; that stretch reads RVLFVHRNVP…PCKINTRLLY (71 aa).

Belongs to the D-isomer specific 2-hydroxyacid dehydrogenase family.

It catalyses the reaction (2R)-3-phosphoglycerate + NAD(+) = 3-phosphooxypyruvate + NADH + H(+). The catalysed reaction is (R)-2-hydroxyglutarate + NAD(+) = 2-oxoglutarate + NADH + H(+). It functions in the pathway amino-acid biosynthesis; L-serine biosynthesis; L-serine from 3-phospho-D-glycerate: step 1/3. Catalyzes the reversible oxidation of 3-phospho-D-glycerate to 3-phosphonooxypyruvate, the first step of the phosphorylated L-serine biosynthesis pathway. Also catalyzes the reversible oxidation of 2-hydroxyglutarate to 2-oxoglutarate. This chain is Putative D-3-phosphoglycerate dehydrogenase, found in Schizosaccharomyces pombe (strain 972 / ATCC 24843) (Fission yeast).